An 863-amino-acid chain; its full sequence is MEAIYNPQAIEATVQKFWTDNNTFQAIENPDKEKFYCLAMFPYPSGRLHMGHVRNYSLGDVISRYQRMQGKNVMQPMGWDAFGLPAENAAIKNKTAPGKWTYENIDYMRNQLQSLGFGYDWGRELATCKPDYYRWEQWFFTQLFEKGLVYKKNATVNWDPVDQTVLANEQVIDGRGWRSGALVERKQIPQWFIKITDYAEELLDDLDQLTEWPEQVKTMQRNWIGRSQGVEMTFAVADSTESFDIYTTRPDTLMGVTYVALAAQHPLAVAAAVDNADLAAFIDECKNSKTTEADMAAMEKKGVDTGLKAIHPLTGKLVPVWAANFVLMDYGSGAVMSVPGHDQRDYEFALKYGLAIEQVIAGQEADDINKAAITEKSTLINSGEFDGLDFEEAFKAISDKLISENKGKTTTNYRLRDWGVSRQRYWGTPIPMINLANGESVPVPTNELPVVLPEDVVMNGTTSPIKADPEWAKTLYNGEEALRETDTFDTFMESSWYYARYCSPNDDTQMIDPAKANYWLPVDQYIGGIEHAILHLLYSRFFHKLLRDVGLVKCDEPFKKLLCQGMVLAETYYREADNGAQEWIAPTDVEVERDEKGQITSSISKIDGQPVLSAGMSKMSKSKNNGIDPQEVIEKYGADTVRLFIMFTSPPEQTLEWSDAGVEGAHRFVKRVYKLAHEFVESTNNSAVVDIAELTLNADHKKLRRELHKTIAKVTDDIGRRNTFNTAIAAIMELMNHLGKAKVNSDEDKAVMQEAVRAVVLMLTPITPHLCHHLWQLVGGSDENVEDASWPVVDNSALVEDEKLIIVQVNGKVRAKITVAADASKEDVEALGLNDESVLKFTDGNTIRKVIYIPGKLLNIVAN.

The 'HIGH' region motif lies at 42 to 52 (PYPSGRLHMGH). Residues 618–622 (KMSKS) carry the 'KMSKS' region motif. Lysine 621 serves as a coordination point for ATP.

This sequence belongs to the class-I aminoacyl-tRNA synthetase family.

The protein resides in the cytoplasm. It catalyses the reaction tRNA(Leu) + L-leucine + ATP = L-leucyl-tRNA(Leu) + AMP + diphosphate. The chain is Leucine--tRNA ligase from Colwellia psychrerythraea (strain 34H / ATCC BAA-681) (Vibrio psychroerythus).